We begin with the raw amino-acid sequence, 1379 residues long: DNA-directed RNA polymerase subunit beta'' (1379 aa).

4 residues coordinate Zn(2+): Cys-224, Cys-295, Cys-302, and Cys-305. Residues 503–524 (SVQSLSVKRRSTSKLSETNDEA) form a disordered region.

The protein belongs to the RNA polymerase beta' chain family. RpoC2 subfamily. As to quaternary structure, in plastids the minimal PEP RNA polymerase catalytic core is composed of four subunits: alpha, beta, beta', and beta''. When a (nuclear-encoded) sigma factor is associated with the core the holoenzyme is formed, which can initiate transcription. The cofactor is Zn(2+).

Its subcellular location is the plastid. The enzyme catalyses RNA(n) + a ribonucleoside 5'-triphosphate = RNA(n+1) + diphosphate. In terms of biological role, DNA-dependent RNA polymerase catalyzes the transcription of DNA into RNA using the four ribonucleoside triphosphates as substrates. In Cuscuta exaltata (Tall dodder), this protein is DNA-directed RNA polymerase subunit beta''.